Here is a 506-residue protein sequence, read N- to C-terminus: Probable cytochrome P450 519E1 (506 aa).

The chain crosses the membrane as a helical span at residues 1 to 21 (MGIGLIILYLLIGLLAYDFTK). Heme is bound at residue Cys453.

It belongs to the cytochrome P450 family. The cofactor is heme.

The protein localises to the membrane. This is Probable cytochrome P450 519E1 (cyp519E1) from Dictyostelium discoideum (Social amoeba).